We begin with the raw amino-acid sequence, 103 residues long: Large ribosomal subunit protein uL24 (103 aa).

This sequence belongs to the universal ribosomal protein uL24 family. Part of the 50S ribosomal subunit.

Its function is as follows. One of two assembly initiator proteins, it binds directly to the 5'-end of the 23S rRNA, where it nucleates assembly of the 50S subunit. One of the proteins that surrounds the polypeptide exit tunnel on the outside of the subunit. This is Large ribosomal subunit protein uL24 from Haemophilus ducreyi (strain 35000HP / ATCC 700724).